A 167-amino-acid chain; its full sequence is CGG triplet repeat-binding protein 1 (167 aa).

Serine 56 bears the Phosphoserine mark. Residues 80 to 84 carry the Nuclear localization signal motif; that stretch reads RKKQR. Serine 164 is modified (phosphoserine).

Ubiquitous. Highly expressed in placenta, thymus, lymph nodes, cerebellum and cerebral cortex. Low expression in other regions of the brain.

The protein localises to the nucleus. In terms of biological role, binds to nonmethylated 5'-d(CGG)(n)-3' trinucleotide repeats in the FMR1 promoter. May play a role in regulating FMR1 promoter. In Homo sapiens (Human), this protein is CGG triplet repeat-binding protein 1 (CGGBP1).